Consider the following 171-residue polypeptide: Large ribosomal subunit protein uL10 (171 aa).

The protein belongs to the universal ribosomal protein uL10 family. As to quaternary structure, part of the ribosomal stalk of the 50S ribosomal subunit. The N-terminus interacts with L11 and the large rRNA to form the base of the stalk. The C-terminus forms an elongated spine to which L12 dimers bind in a sequential fashion forming a multimeric L10(L12)X complex.

Forms part of the ribosomal stalk, playing a central role in the interaction of the ribosome with GTP-bound translation factors. The protein is Large ribosomal subunit protein uL10 of Methylocella silvestris (strain DSM 15510 / CIP 108128 / LMG 27833 / NCIMB 13906 / BL2).